The primary structure comprises 350 residues: Heat-inducible transcription repressor HrcA (350 aa).

This sequence belongs to the HrcA family.

Functionally, negative regulator of class I heat shock genes (grpE-dnaK-dnaJ and groELS operons). Prevents heat-shock induction of these operons. This is Heat-inducible transcription repressor HrcA from Ligilactobacillus salivarius (strain UCC118) (Lactobacillus salivarius).